The chain runs to 136 residues: MKLVFSHVYDKSGNYIFPYCSPEESTIDYDSEEYVSRYITFHPNDVLEELYDESITNRFIGVDEIEALIDYENVKIGHWLYEEGCELEDYDPEETTYVVISRKELIYLLEKWDEFLAKPIIDPHYQEIIDTKEAYL.

Belongs to the UPF0275 family.

The chain is UPF0275 protein PM0493 from Pasteurella multocida (strain Pm70).